We begin with the raw amino-acid sequence, 51 residues long: Small ribosomal subunit protein eS31 (51 aa).

Positions 22, 25, 40, and 43 each coordinate Zn(2+). Residues 22–43 (CVRCSHGIFMADHGDRYACGRC) form a C4-type zinc finger.

It belongs to the eukaryotic ribosomal protein eS31 family. As to quaternary structure, part of the 30S ribosomal subunit. The cofactor is Zn(2+).

This Methanosphaera stadtmanae (strain ATCC 43021 / DSM 3091 / JCM 11832 / MCB-3) protein is Small ribosomal subunit protein eS31.